A 358-amino-acid polypeptide reads, in one-letter code: Peptide chain release factor 1 (358 aa).

N5-methylglutamine is present on Gln235. The disordered stretch occupies residues 284–309 (KVESERSASRKSQVGSGDRSERIRTY).

Belongs to the prokaryotic/mitochondrial release factor family. Methylated by PrmC. Methylation increases the termination efficiency of RF1.

It is found in the cytoplasm. In terms of biological role, peptide chain release factor 1 directs the termination of translation in response to the peptide chain termination codons UAG and UAA. The sequence is that of Peptide chain release factor 1 from Bartonella tribocorum (strain CIP 105476 / IBS 506).